The sequence spans 506 residues: CDK5 regulatory subunit-associated protein 3 (506 aa).

3 short sequence motifs (shuffled ATG8-binding motif) span residues Ile-267–Gly-270, Ile-292–Gly-295, and Ile-310–Gly-313. A required for interaction with UFL1 and mediates interaction with CHEK1 region spans residues Trp-269–Leu-506. Residues Asp-355–Glu-370 form an RPL10a-binding domain (RBD) region. Residue Lys-450 forms a Glycyl lysine isopeptide (Lys-Gly) (interchain with G-Cter in SUMO2) linkage.

The protein belongs to the CDK5RAP3 family. In terms of assembly, substrate adapter component of the UFM1 ribosome E3 ligase (UREL) complex, composed of UFL1, DDRGK1 and CDK5RAP3. Interaction with UFL1 anchors CDK5RAP3 in the cytoplasm, preventing its translocation to the nucleus which allows expression of the CCND1 cyclin and progression of cells through the G1/S transition. Interacts with ATG8 family proteins MAP1LC3A, MAP1LC3B, GABARAP, GABARAPL1 and GABARAPL2. Interacts with CDK5R1; competes with CDK5RAP1 and CDK5RAP2. Interacts with RELA. Interacts with CHEK1; may negatively regulate CHEK1 and thereby stimulate entry into mitosis. Interacts with CDKN2A/ARF and MDM2; forms a ternary complex involved in regulation of p53/TP53. Interacts with MAPK14. Interacts with CCNB1. Interacts with TUBG1; may regulate CDK5RAP3 in mitotic G2/M transition checkpoint. In terms of processing, may be phosphorylated by CDK5. Ubiquitinated. Probably triggers proteasomal degradation and is negatively regulated by UFL1. Post-translationally, may be ufmylated. In terms of processing, cleaved by caspases early during apoptosis, the resulting peptides may play a role in rupture of the nuclear envelope.

Its subcellular location is the endoplasmic reticulum membrane. The protein localises to the cytoplasm. It is found in the nucleus. It localises to the cytoskeleton. The protein resides in the microtubule organizing center. Its subcellular location is the centrosome. Substrate adapter of E3 ligase complexes mediating ufmylation, the covalent attachment of the ubiquitin-like modifier UFM1 to substrate proteins, and which is involved in various processes, such as ribosome recycling and reticulophagy (also called ER-phagy). As part of the UREL complex, plays a key role in ribosome recycling by promoting mono-ufmylation of RPL26/uL24 subunit of the 60S ribosome. Ufmylation of RPL26/uL24 occurs on free 60S ribosomes following ribosome dissociation: it weakens the junction between post-termination 60S subunits and SEC61 translocons, promoting release and recycling of the large ribosomal subunit from the endoplasmic reticulum membrane. Ufmylation of RPL26/uL24 and subsequent 60S ribosome recycling either take place after normal termination of translation or after ribosome stalling during cotranslational translocation at the endoplasmic reticulum. Within the UREL complex, CDK5RAP3 acts as a substrate adapter that constrains UFL1 ligase activity to mono-ufmylate RPL26/uL24 at 'Lys-134'. The UREL complex is also involved in reticulophagy in response to endoplasmic reticulum stress by promoting ufmylation of proteins such as CYB5R3, thereby promoting lysosomal degradation of ufmylated proteins. Also acts as a regulator of transcription: negatively regulates NF-kappa-B-mediated gene transcription through the control of RELA phosphorylation. Also regulates mitotic G2/M transition checkpoint and mitotic G2 DNA damage checkpoint. Through its interaction with CDKN2A/ARF and MDM2 may induce MDM2-dependent p53/TP53 ubiquitination, stabilization and activation in the nucleus, thereby promoting G1 cell cycle arrest and inhibition of cell proliferation. May also play a role in the rupture of the nuclear envelope during apoptosis. May regulate MAPK14 activity by regulating its dephosphorylation by PPM1D/WIP1. Required for liver development. The chain is CDK5 regulatory subunit-associated protein 3 from Pongo abelii (Sumatran orangutan).